The sequence spans 1885 residues: Chitin synthase 5 (1885 aa).

The Myosin motor domain occupies 1-789 (MATRGNVPAH…SIALTGSQAA (789 aa)). Residue 99–106 (GESGSGKT) participates in ATP binding. 2 N-linked (GlcNAc...) asparagine glycosylation sites follow: N219 and N429. The disordered stretch occupies residues 601 to 649 (KPLRMPSVSRKKHDQLRRMASRRADRSPAPQEEEPLPGTEEAKVRRTKP). Residues 609–621 (SRKKHDQLRRMAS) show a composition bias toward basic residues. The segment at 666–690 (LDNITKSLTAPNVNNYFVFCLKPND) is actin-binding. N-linked (GlcNAc...) asparagine glycosylation occurs at N668. A disordered region spans residues 794 to 817 (GDIGSPSRPDTPGHNPFSDSKARL). The next 2 helical transmembrane spans lie at 894-914 (WLAI…KWIG) and 929-949 (FAIN…IIVF). The Cytochrome b5 heme-binding domain maps to 957–1016 (QNVYSAAELSAHDGKGKHSAYVAIRGQVFDLGAFMPNHYPKIIPQSSLKKYAGVDATGLF). N1043 and N1068 each carry an N-linked (GlcNAc...) asparagine glycan. The chain crosses the membrane as a helical span at residues 1205 to 1225 (ILLAVSILLCSVIGFKFFAAL). N1462 and N1568 each carry an N-linked (GlcNAc...) asparagine glycan. 3 consecutive transmembrane segments (helical) span residues 1599-1619 (LLST…IVLL), 1626-1646 (VPLT…IIFI), and 1653-1673 (MIGW…GLPL). N-linked (GlcNAc...) asparagine glycans are attached at residues N1759 and N1790. The DEK-C domain maps to 1827-1882 (LPTDDMLLNEIRDILRTADLMTVTKKGIKQELERRFNVNLDMKRAYIGSATEAILS).

The protein in the N-terminal section; belongs to the TRAFAC class myosin-kinesin ATPase superfamily. Myosin family. This sequence in the C-terminal section; belongs to the chitin synthase family. Class V subfamily. In terms of processing, maximal activity requires trypsin activation, suggesting a zymogenic nature.

The protein resides in the cell membrane. It is found in the membrane. It catalyses the reaction [(1-&gt;4)-N-acetyl-beta-D-glucosaminyl](n) + UDP-N-acetyl-alpha-D-glucosamine = [(1-&gt;4)-N-acetyl-beta-D-glucosaminyl](n+1) + UDP + H(+). In terms of biological role, polymerizes chitin, a structural polymer of the cell wall and septum, by transferring the sugar moiety of UDP-GlcNAc to the non-reducing end of the growing chitin polymer. CHS5 is required for the sustained growth at 37 degrees Celsius and is of critical importance for virulence. Especially important at infection temperatures for maintaining the cell wall integrity of developing yeast buds, elongating tips of hyphae, and random sites of expansion in sclerotic forms. In Exophiala dermatitidis (strain ATCC 34100 / CBS 525.76 / NIH/UT8656) (Black yeast), this protein is Chitin synthase 5.